Reading from the N-terminus, the 257-residue chain is Hydroxyacylglutathione hydrolase (257 aa).

Zn(2+) is bound by residues His54, His56, Asp58, His59, His113, Asp137, and His175.

It belongs to the metallo-beta-lactamase superfamily. Glyoxalase II family. In terms of assembly, monomer. Zn(2+) is required as a cofactor.

The catalysed reaction is an S-(2-hydroxyacyl)glutathione + H2O = a 2-hydroxy carboxylate + glutathione + H(+). It functions in the pathway secondary metabolite metabolism; methylglyoxal degradation; (R)-lactate from methylglyoxal: step 2/2. Functionally, thiolesterase that catalyzes the hydrolysis of S-D-lactoyl-glutathione to form glutathione and D-lactic acid. This is Hydroxyacylglutathione hydrolase from Trichodesmium erythraeum (strain IMS101).